The following is a 709-amino-acid chain: Polyribonucleotide nucleotidyltransferase (709 aa).

The Mg(2+) site is built by Asp-489 and Asp-495. The 60-residue stretch at 556–615 (PKIDMIKIDVDKIKVVIGKGGETIDKIIAETGVKIDIDEEGNVSIFSSDQAAIDRTKDII) folds into the KH domain. The S1 motif domain maps to 625–693 (GEVYHAKVVR…DKGRVDASMK (69 aa)).

This sequence belongs to the polyribonucleotide nucleotidyltransferase family. It depends on Mg(2+) as a cofactor.

The protein resides in the cytoplasm. The enzyme catalyses RNA(n+1) + phosphate = RNA(n) + a ribonucleoside 5'-diphosphate. Involved in mRNA degradation. Catalyzes the phosphorolysis of single-stranded polyribonucleotides processively in the 3'- to 5'-direction. The protein is Polyribonucleotide nucleotidyltransferase of Streptococcus agalactiae serotype Ia (strain ATCC 27591 / A909 / CDC SS700).